The chain runs to 2028 residues: Transient receptor potential cation channel subfamily M member 6 (2028 aa).

At 1-747 (MQVKKSWIEG…MWMGRLKMRK (747 aa)) the chain is on the cytoplasmic side. The tract at residues 577-601 (QPYKSKEKPEDSQKSKKKSKERQSL) is disordered. The span at 580–590 (KSKEKPEDSQK) shows a compositional bias: basic and acidic residues. The chain crosses the membrane as a helical span at residues 748 to 768 (NSWLKIIISILLPPMILTLEF). Residues 769 to 847 (KSKAEMSHVP…YEFYSAPFVK (79 aa)) lie on the Extracellular side of the membrane. The chain crosses the membrane as a helical span at residues 848–868 (FWFYTMAYLAFLMLFTYTVLV). Topologically, residues 869 to 910 (EMQPQPSVHEWLVIIYIFTNAIEKVREICISEPSKFKQKVKM) are cytoplasmic. The helical transmembrane segment at 911–931 (WLSEYWNLMETVAIGLFAVGF) threads the bilayer. At 932–945 (GLRWGHPPLQTAGR) the chain is on the extracellular side. A helical transmembrane segment spans residues 946-966 (LIYCIDIIFWFSRLMDFFAVN). The Cytoplasmic portion of the chain corresponds to 967-978 (QHAGPYVTMIAK). The helical transmembrane segment at 979–999 (MAANMFYIVIIMAIVLLSFGV) threads the bilayer. The Extracellular portion of the chain corresponds to 1000–1018 (ARKAILSPKEPPSWRLARD). Residues 1019 to 1039 (IVFEPYWMMYGEVYASDIDVC) constitute an intramembrane region (pore-forming). At 1040–1053 (SNETSCPPGSFLTP) the chain is on the extracellular side. The helical transmembrane segment at 1054 to 1074 (FLQAVYLFVQYIIMVNLLIAC) threads the bilayer. Over 1075 to 2028 (FNNIYLDIKS…RSSLEDHTRL (954 aa)) the chain is Cytoplasmic. Composition is skewed to basic and acidic residues over residues 1313–1323 (KREASHVREEQ) and 1665–1677 (DHLRQPQENRDKT). Disordered stretches follow at residues 1313–1339 (KREASHVREEQEEREMEQRTTASGISH) and 1658–1694 (RHTTQASDHLRQPQENRDKTPTWNSGSTSLSRSFLTR). The segment covering 1682 to 1694 (SGSTSLSRSFLTR) has biased composition (low complexity). Threonine 1730 bears the Phosphothreonine; by autocatalysis mark. One can recognise an Alpha-type protein kinase domain in the interval 1756-1986 (TLDKSMSSWS…CCGKLRLPDL (231 aa)). ADP-binding residues include glycine 1783, glycine 1784, leucine 1785, arginine 1786, and lysine 1810. Threonine 1857 is subject to Phosphothreonine; by autocatalysis. ADP-binding residues include glutamate 1882 and methionine 1885. Histidine 1915 lines the Zn(2+) pocket. Catalysis depends on aspartate 1929, which acts as the Proton acceptor. An ADP-binding site is contributed by aspartate 1939. The Zn(2+) site is built by histidine 1972, cysteine 1974, and cysteine 1978. Residues 2009–2028 (TEELPERDKNRSSLEDHTRL) form a disordered region. Residues 2012–2028 (LPERDKNRSSLEDHTRL) show a composition bias toward basic and acidic residues.

This sequence in the C-terminal section; belongs to the protein kinase superfamily. Alpha-type protein kinase family. ALPK subfamily. In the N-terminal section; belongs to the transient receptor (TC 1.A.4) family. LTrpC subfamily. TRPM6 sub-subfamily. As to quaternary structure, forms heteromers with TRPM7; TRPM6 increases the current amplitude of TRPM6/7 heteromers as compared to TRPM7 homomers. Interacts (via kinase domain) with RACK1. Autophosphorylated; autophosphorylation controls the protein kinase activity of TRPM6 towards their substrates. Autophosphorylation of Thr-1857 in the kinase domain is essential for the inhibitory effect of RACK1. Post-translationally, the C-terminus of TRPM6 is proteolytically cleaved in vivo, in a cell type-specific fashion, releasing the kinase module from the transmembrane domain. The cleaved kinase fragments are translocated to the nucleus to phosphorylate histones and regulate gene expression.

The protein resides in the cell membrane. It is found in the apical cell membrane. It localises to the nucleus. It catalyses the reaction L-seryl-[protein] + ATP = O-phospho-L-seryl-[protein] + ADP + H(+). The enzyme catalyses L-threonyl-[protein] + ATP = O-phospho-L-threonyl-[protein] + ADP + H(+). It carries out the reaction Mg(2+)(in) = Mg(2+)(out). The catalysed reaction is Ca(2+)(in) = Ca(2+)(out). It catalyses the reaction Zn(2+)(in) = Zn(2+)(out). Its activity is regulated as follows. Strongly inhibited by intracellular Mg(2+); unlikely to be active at physiological levels of intracellular Mg(2+). In the heteromeric TRPM6-TRPM7 channels complexes, TRPM7 are able to offset the very high sensitivity of TRPM6 to cytosolic Mg(2+) to physiologically relevant concentrations, whereas TRPM6 relieve TRPM7 from the inhibitory action of Mg-ATP. Consequently, the association of TRPM6 with TRPM7 allow for high constitutive activity of TRPM6/7 in the presence of physiological levels of Mg(2+) and Mg-ATP. The kinase activity is controlled through the autophosphorylation of a serine/threonine-rich region located to the N-terminal of the catalytic domain. Its function is as follows. Bifunctional protein that combines an ion channel with an intrinsic kinase domain, enabling it to modulate cellular functions either by conducting ions through the pore or by phosphorylating downstream proteins via its kinase domain. Crucial for Mg(2+) homeostasis. Has an important role in epithelial magnesium transport and in the active Mg(2+) absorption in the gut and kidney. However, whether TRPM6 forms functional homomeric channels by itself or functions primarily as a subunit of heteromeric TRPM6-TRPM7 channels, is still under debate. The C-terminal kinase domain can be cleaved from the channel segment in a cell-type-specific fashion. The cleaved kinase fragments can translocate to the nucleus, and bind chromatin-remodeling complex proteins to ultimately phosphorylate specific Ser/Thr residues of histones known to be functionally important for cell differentiation and development. In Mus musculus (Mouse), this protein is Transient receptor potential cation channel subfamily M member 6 (Trpm6).